The sequence spans 315 residues: Type II restriction enzyme SalI (315 aa).

It carries out the reaction Endonucleolytic cleavage of DNA to give specific double-stranded fragments with terminal 5'-phosphates.. In terms of biological role, a P subtype restriction enzyme that recognizes the double-stranded sequence 5'-GTCGAC-3' and cleaves after G-1. The protein is Type II restriction enzyme SalI of Streptomyces albus G.